A 281-amino-acid polypeptide reads, in one-letter code: 4-diphosphocytidyl-2-C-methyl-D-erythritol kinase (281 aa).

The active site involves Lys11. An ATP-binding site is contributed by 92–102 (LVSAGLAGGSA). The active site involves Asp132.

The protein belongs to the GHMP kinase family. IspE subfamily.

The catalysed reaction is 4-CDP-2-C-methyl-D-erythritol + ATP = 4-CDP-2-C-methyl-D-erythritol 2-phosphate + ADP + H(+). It functions in the pathway isoprenoid biosynthesis; isopentenyl diphosphate biosynthesis via DXP pathway; isopentenyl diphosphate from 1-deoxy-D-xylulose 5-phosphate: step 3/6. Its function is as follows. Catalyzes the phosphorylation of the position 2 hydroxy group of 4-diphosphocytidyl-2C-methyl-D-erythritol. In Ehrlichia ruminantium (strain Gardel), this protein is 4-diphosphocytidyl-2-C-methyl-D-erythritol kinase.